The sequence spans 149 residues: Calmodulin-5/6/7/8 (149 aa).

Position 2 is an N-acetylalanine (A2). EF-hand domains lie at 8–43 (DQIS…LGQN), 44–79 (PTEA…KMKD), 81–116 (DSEE…LGEK), and 117–149 (LTDE…MMAK). Positions 21, 23, 25, 27, 32, 57, 59, 61, 63, 68, 94, 96, 98, and 105 each coordinate Ca(2+). Position 116 is an N6,N6,N6-trimethyllysine (K116). Ca(2+) is bound by residues D130, D132, D134, Q136, and E141.

Belongs to the calmodulin family. In terms of tissue distribution, high expression of PCM5 and 8 in stolon tips and stems, moderate in roots, and low in leaves. Steady-state expression of PCM6 in all the tissues tested, except in the leaves where the expression is lower.

In terms of biological role, calmodulin mediates the control of a large number of enzymes, ion channels and other proteins by Ca(2+). Among the enzymes to be stimulated by the calmodulin-Ca(2+) complex are a number of protein kinases and phosphatases. The sequence is that of Calmodulin-5/6/7/8 (PCM5) from Solanum tuberosum (Potato).